A 260-amino-acid polypeptide reads, in one-letter code: GDSL esterase/lipase WDL1 (260 aa).

Positions 1-35 are cleaved as a signal peptide; sequence MLGFAPAPGRPLFVLFGSSIVQFSFSNGGWGAALA. Ser18 acts as the Nucleophile in catalysis. 2 N-linked (GlcNAc...) asparagine glycosylation sites follow: Asn83 and Asn150. Catalysis depends on residues Asp191 and His194.

The protein belongs to the 'GDSL' lipolytic enzyme family. As to expression, highly expressed in panicles. Expressed in shoots, mature flowers and seeds.

It is found in the endoplasmic reticulum. In terms of biological role, involved in the organization of leaf cuticle and wax crystals. In Oryza sativa subsp. japonica (Rice), this protein is GDSL esterase/lipase WDL1.